Consider the following 540-residue polypeptide: ATP-dependent RNA helicase DBP3 (540 aa).

Basic and acidic residues predominate over residues 1–35 (MTVEESKKRKLTDDVAIKQNEKKIKKDKKVKDKKD). A disordered region spans residues 1–89 (MTVEESKKRK…TTEQPSKQVK (89 aa)). A compositionally biased stretch (basic residues) spans 36-52 (KKDKKDKKDKKEKKEKK). Composition is skewed to basic and acidic residues over residues 53-62 (EKKEKNDKKD) and 68-79 (DKKAEQVDKLSE). Positions 130 to 156 (LAFNQISLDKEVQNEIAKFPKPTPIQA) match the Q motif motif. Residues 159–332 (WPYLLSGKDV…STFMKEPVKV (174 aa)) enclose the Helicase ATP-binding domain. Residue 172-179 (AETGSGKT) coordinates ATP. The DEAD box signature appears at 279–282 (DEAD). Positions 361 to 510 (KLLDLLKKYQ…PVPEDLIKFG (150 aa)) constitute a Helicase C-terminal domain.

The protein belongs to the DEAD box helicase family. DDX5/DBP2 subfamily.

It is found in the nucleus. Its subcellular location is the nucleolus. The catalysed reaction is ATP + H2O = ADP + phosphate + H(+). Its function is as follows. ATP-dependent RNA helicase required for 60S ribosomal subunit synthesis. Involved in efficient pre-rRNA processing, predominantly at site A3, which is necessary for the normal formation of 25S and 5.8S rRNAs. This Candida glabrata (strain ATCC 2001 / BCRC 20586 / JCM 3761 / NBRC 0622 / NRRL Y-65 / CBS 138) (Yeast) protein is ATP-dependent RNA helicase DBP3 (DBP3).